The chain runs to 345 residues: Protein RecA (345 aa).

67 to 74 (GPESSGKT) lines the ATP pocket.

The protein belongs to the RecA family.

It is found in the cytoplasm. Can catalyze the hydrolysis of ATP in the presence of single-stranded DNA, the ATP-dependent uptake of single-stranded DNA by duplex DNA, and the ATP-dependent hybridization of homologous single-stranded DNAs. It interacts with LexA causing its activation and leading to its autocatalytic cleavage. The chain is Protein RecA from Acidothermus cellulolyticus (strain ATCC 43068 / DSM 8971 / 11B).